The primary structure comprises 332 residues: Nucleoid-associated protein VVA0877 (332 aa).

It belongs to the YejK family.

The protein localises to the cytoplasm. The protein resides in the nucleoid. The polypeptide is Nucleoid-associated protein VVA0877 (Vibrio vulnificus (strain YJ016)).